The following is an 83-amino-acid chain: Cytochrome b559 subunit alpha (83 aa).

A helical transmembrane segment spans residues Val21 to Trp35. Heme is bound at residue His23.

The protein belongs to the PsbE/PsbF family. In terms of assembly, heterodimer of an alpha subunit and a beta subunit. PSII is composed of 1 copy each of membrane proteins PsbA, PsbB, PsbC, PsbD, PsbE, PsbF, PsbH, PsbI, PsbJ, PsbK, PsbL, PsbM, PsbT, PsbX, PsbY, PsbZ, Psb30/Ycf12, at least 3 peripheral proteins of the oxygen-evolving complex and a large number of cofactors. It forms dimeric complexes. The cofactor is heme b.

The protein localises to the plastid. It is found in the chloroplast thylakoid membrane. In terms of biological role, this b-type cytochrome is tightly associated with the reaction center of photosystem II (PSII). PSII is a light-driven water:plastoquinone oxidoreductase that uses light energy to abstract electrons from H(2)O, generating O(2) and a proton gradient subsequently used for ATP formation. It consists of a core antenna complex that captures photons, and an electron transfer chain that converts photonic excitation into a charge separation. The sequence is that of Cytochrome b559 subunit alpha from Chaetosphaeridium globosum (Charophycean green alga).